We begin with the raw amino-acid sequence, 252 residues long: Trans-aconitate 2-methyltransferase (252 aa).

This sequence belongs to the methyltransferase superfamily. Tam family.

It is found in the cytoplasm. It carries out the reaction trans-aconitate + S-adenosyl-L-methionine = (E)-3-(methoxycarbonyl)pent-2-enedioate + S-adenosyl-L-homocysteine. Functionally, catalyzes the S-adenosylmethionine monomethyl esterification of trans-aconitate. This chain is Trans-aconitate 2-methyltransferase, found in Escherichia coli O17:K52:H18 (strain UMN026 / ExPEC).